Reading from the N-terminus, the 450-residue chain is MDMGNQHPSIKRLHEIQKEVKEIEQQVAVFSGLSTDRDYKKLERSLTKQLFEIDSVDTEGKGDIQQARKRAAQETERLLKELEQNANHPRRLEIEAIFKEAQALVEREITPFYQGGNCVNEEFEEGIQDVVLRLTQVKTGGKVSLRKARYRTLTKVCAVQEIIESCAKRQLSLPLSNDAHPSVSKINSVMCEVNKARGTLIALLMGVSSNDTCRHLACVLTGLVADLDALDVCGRTEIRNYRKEVVEEINKLQKYLDLDEEANSTHAYDLAQNHSILKIEEIRKKLKEVNSLLLKTENASDLYLGSKAELQGLIAQLDEVSLGKNPCIREARRRAVIEVQTLITYIDLKEALGKRQMYAEQTAAEHQSHKAVWTVLGNLSQIQQEVISFDGNKTDKNYMRLEELLTKQLLALDAVDPQGDERCKAARKQAVKLAQNILYYLDMKTDEWEY.

BAG domains are found at residues 9–86, 95–167, 182–260, 275–350, and 365–442; these read SIKR…EQNA, EAIF…ESCA, SVSK…DLDE, SILK…DLKE, and EHQS…YYLD.

As to quaternary structure, binds to the ATPase domain of HSP/HSC70 chaperones.

Its function is as follows. Co-chaperone for HSP/HSP70 proteins. It functions as a nucleotide-exchange factor promoting the release of ADP from HSP70, thereby activating HSP70-mediated protein refolding. In Gallus gallus (Chicken), this protein is BAG family molecular chaperone regulator 5 (BAG5).